The following is a 33-amino-acid chain: Beta-amanitin proprotein (33 aa).

A propeptide spanning residues 1–10 (MSDINATRLP) is cleaved from the precursor. The cyclopeptide (Ile-Pro) cross-link spans 11–18 (IWGIGCDP). The 2'-cysteinyl-6'-hydroxytryptophan sulfoxide (Trp-Cys) cross-link spans 12–16 (WGIGC). A propeptide spanning residues 19-33 (CVGDEVTALLTRGEA) is cleaved from the precursor.

It belongs to the MSDIN fungal toxin family. In terms of processing, processed by the macrocyclase-peptidase enzyme POPB to yield a toxic cyclic decapeptide. POPB first removes 10 residues from the N-terminus. Conformational trapping of the remaining peptide forces the enzyme to release this intermediate rather than proceed to macrocyclization. The enzyme rebinds the remaining peptide in a different conformation and catalyzes macrocyclization of the N-terminal 8 residues.

Its function is as follows. Toxin belonging to the bicyclic octapeptides amatoxins that acts by binding non-competitively to RNA polymerase II and greatly slowing the elongation of transcripts from target promoters. This Amanita fuligineoides protein is Beta-amanitin proprotein.